Here is a 569-residue protein sequence, read N- to C-terminus: Sialic acid-binding Ig-like lectin 5 (569 aa).

A signal peptide spans methionine 1 to alanine 16. Residues threonine 17 to leucine 439 are Extracellular-facing. The 99-residue stretch at aspartate 18–aspartate 116 folds into the Ig-like V-type domain. Intrachain disulfides connect cysteine 35–cysteine 163, cysteine 40–cysteine 96, cysteine 157–cysteine 206, and cysteine 265–cysteine 308. A glycan (N-linked (GlcNAc...) asparagine) is linked at asparagine 95. The N-acetylneuraminate site is built by arginine 114, lysine 120, and serine 122. Ig-like C2-type domains are found at residues proline 139–serine 224 and proline 229–serine 324. Asparagine 151, asparagine 200, and asparagine 203 each carry an N-linked (GlcNAc...) asparagine glycan. N-linked (GlcNAc...) asparagine glycosylation is found at asparagine 369, asparagine 372, and asparagine 387. A helical membrane pass occupies residues glycine 440 to phenylalanine 460. Residues threonine 461–cysteine 569 are Cytoplasmic-facing. The disordered stretch occupies residues histidine 508 to alanine 556. An ITIM motif motif is present at residues leucine 536–leucine 541. The SLAM-like motif motif lies at serine 559–isoleucine 564.

It belongs to the immunoglobulin superfamily. SIGLEC (sialic acid binding Ig-like lectin) family. As to expression, predominantly expressed by immature monocytic/myeloid lineage cells in bone marrow. Also found at lower levels in mature neutrophils and monocytes.

It localises to the membrane. Putative adhesion molecule that mediates sialic-acid dependent binding to cells. Preferentially binds to alpha-2,3-linked sialic acid. The sialic acid recognition site may be masked by cis interactions with sialic acids on the same cell surface. This chain is Sialic acid-binding Ig-like lectin 5 (Siglec5), found in Mus musculus (Mouse).